We begin with the raw amino-acid sequence, 57 residues long: uncharacterized protein (57 aa).

Residues 9–45 (NWQEEIRKIIIERVRREAKKRLLEETRKLRMEMKSSK) adopt a coiled-coil conformation.

This is an uncharacterized protein from Archaeoglobus fulgidus (strain ATCC 49558 / DSM 4304 / JCM 9628 / NBRC 100126 / VC-16).